Consider the following 914-residue polypeptide: Translation initiation factor IF-2 (914 aa).

Positions 58–160 are disordered; that stretch reads KTEKKQTAKK…EAEPKIEVMP (103 aa). Over residues 70-91 the composition is skewed to basic and acidic residues; it reads KKDTVKKDTVKKTAVKKDDSKA. The span at 92 to 103 shows a compositional bias: basic residues; that stretch reads AKKTKPIAKKSA. Residues 104-160 show a composition bias toward basic and acidic residues; that stretch reads PKTEKKVEKKVESKISKPDNEILEAKPEISKPEIKAEPKKEEIEQKQEAEPKIEVMP. Positions 413–582 constitute a tr-type G domain; it reads ERVPVITIMG…LLQADLLELK (170 aa). The G1 stretch occupies residues 422–429; sequence GHVDHGKT. Position 422-429 (422-429) interacts with GTP; that stretch reads GHVDHGKT. Residues 447–451 are G2; sequence GITQH. The G3 stretch occupies residues 468 to 471; sequence DTPG. GTP contacts are provided by residues 468–472 and 522–525; these read DTPGH and NKMD. Positions 522 to 525 are G4; the sequence is NKMD. Positions 558–560 are G5; sequence SAK.

The protein belongs to the TRAFAC class translation factor GTPase superfamily. Classic translation factor GTPase family. IF-2 subfamily.

The protein resides in the cytoplasm. In terms of biological role, one of the essential components for the initiation of protein synthesis. Protects formylmethionyl-tRNA from spontaneous hydrolysis and promotes its binding to the 30S ribosomal subunits. Also involved in the hydrolysis of GTP during the formation of the 70S ribosomal complex. This chain is Translation initiation factor IF-2, found in Campylobacter hominis (strain ATCC BAA-381 / DSM 21671 / CCUG 45161 / LMG 19568 / NCTC 13146 / CH001A).